Consider the following 837-residue polypeptide: Protein translocase subunit SecA 1 (837 aa).

Residues glutamine 85, 103–107 (GEGKT), and aspartate 493 contribute to the ATP site. The Zn(2+) site is built by cysteine 821, cysteine 823, cysteine 832, and histidine 833.

This sequence belongs to the SecA family. As to quaternary structure, monomer and homodimer. Part of the essential Sec protein translocation apparatus which comprises SecA, SecYEG and auxiliary proteins SecDF. Other proteins may also be involved. It depends on Zn(2+) as a cofactor.

Its subcellular location is the cell membrane. The protein resides in the cytoplasm. The enzyme catalyses ATP + H2O + cellular proteinSide 1 = ADP + phosphate + cellular proteinSide 2.. In terms of biological role, part of the Sec protein translocase complex. Interacts with the SecYEG preprotein conducting channel. Has a central role in coupling the hydrolysis of ATP to the transfer of proteins into and across the cell membrane, serving as an ATP-driven molecular motor driving the stepwise translocation of polypeptide chains across the membrane. This chain is Protein translocase subunit SecA 1, found in Streptococcus pneumoniae serotype 4 (strain ATCC BAA-334 / TIGR4).